Here is a 243-residue protein sequence, read N- to C-terminus: 1-(5-phosphoribosyl)-5-[(5-phosphoribosylamino)methylideneamino] imidazole-4-carboxamide isomerase (243 aa).

The Proton acceptor role is filled by Asp-8. The active-site Proton donor is the Asp-129.

It belongs to the HisA/HisF family.

The protein localises to the cytoplasm. The catalysed reaction is 1-(5-phospho-beta-D-ribosyl)-5-[(5-phospho-beta-D-ribosylamino)methylideneamino]imidazole-4-carboxamide = 5-[(5-phospho-1-deoxy-D-ribulos-1-ylimino)methylamino]-1-(5-phospho-beta-D-ribosyl)imidazole-4-carboxamide. It participates in amino-acid biosynthesis; L-histidine biosynthesis; L-histidine from 5-phospho-alpha-D-ribose 1-diphosphate: step 4/9. This Brucella abortus (strain 2308) protein is 1-(5-phosphoribosyl)-5-[(5-phosphoribosylamino)methylideneamino] imidazole-4-carboxamide isomerase.